A 779-amino-acid chain; its full sequence is Cysteine-rich protein 2-binding protein (779 aa).

The disordered stretch occupies residues 1–34 (MDSSIHLSGLLSRHDDDATRTSTSEGLEEGEVEG). S4 bears the Phosphoserine mark. The residue at position 230 (K230) is an N6-acetyllysine. Disordered stretches follow at residues 247–292 (SRNP…PVKF), 314–345 (LSSS…HSAT), and 360–457 (PPQA…GPRY). Over residues 255–275 (MELKEKRSRTQEAKDIRRAQK) the composition is skewed to basic and acidic residues. S284 bears the Phosphoserine mark. K291 is modified (N6-acetyllysine). Residues 314-334 (LSSSDRTPLTSPSPSPSLDFS) are compositionally biased toward low complexity. 2 stretches are compositionally biased toward basic and acidic residues: residues 402 to 423 (RAPE…RMDG) and 443 to 452 (KPPLEKDMKP). At S413 the chain carries Phosphoserine. The 145-residue stretch at 635 to 779 (LDYCYVRPNH…KHAFFLRLRR (145 aa)) folds into the N-acetyltransferase domain.

In terms of assembly, interacts with the LIM 1 domain of CSRP2. Component of the ADA2A-containing complex (ATAC), composed of CSRP2BP, KAT2A, TADA2L, TADA3L, ZZ3, MBIP, WDR5, YEATS2, CCDC101 and DR1. In the complex, it probably interacts directly with KAT2A, MBIP and WDR5.

The protein resides in the nucleus. It is found in the cytoplasm. Its function is as follows. Component of the ATAC complex, a complex with histone acetyltransferase activity on histones H3 and H4. May function as a scaffold for the ATAC complex to promote ATAC complex stability. Has also weak histone acetyltransferase activity toward histone H4. Required for the normal progression through G1 and G2/M phases of the cell cycle. The sequence is that of Cysteine-rich protein 2-binding protein from Mus musculus (Mouse).